The chain runs to 281 residues: MLKIAVPNKGSLSERAMEILAEAGYAGRGDSKSLNVFDEANNVEFFFLRPKDIAIYVAGGQLDLGITGRDLARDSQADVHEVLSLGFGSSTFRYAAPADEEWSIEKLDGKRIATSYPNLVRDDLAARGLSAEVLRLDGAVEVSIKLGVADAIADVVSTGRTLRQQGLAPFGEVLCTSEAVIVGRKDEKVTPEQQILLRRIQGILHAQNFLMLDYNVDRDNLDAATAVTPGLSGPTVSPLARDNWVAVRAMVPRRSANAIMDKLAGLGAEAILASEIRIARI.

Belongs to the ATP phosphoribosyltransferase family. Long subfamily. It depends on Mg(2+) as a cofactor.

Its subcellular location is the cytoplasm. It catalyses the reaction 1-(5-phospho-beta-D-ribosyl)-ATP + diphosphate = 5-phospho-alpha-D-ribose 1-diphosphate + ATP. The protein operates within amino-acid biosynthesis; L-histidine biosynthesis; L-histidine from 5-phospho-alpha-D-ribose 1-diphosphate: step 1/9. With respect to regulation, feedback inhibited by histidine. Its function is as follows. Catalyzes the condensation of ATP and 5-phosphoribose 1-diphosphate to form N'-(5'-phosphoribosyl)-ATP (PR-ATP). Has a crucial role in the pathway because the rate of histidine biosynthesis seems to be controlled primarily by regulation of HisG enzymatic activity. The sequence is that of ATP phosphoribosyltransferase from Corynebacterium glutamicum (strain R).